The primary structure comprises 644 residues: Sodium/hydrogen exchanger 9 (644 aa).

Over 1–20 the chain is Lumenal; the sequence is MAGQLRLTSGKDEDHFQHQG. Residues 21 to 41 form a helical membrane-spanning segment; that stretch reads AVELLAFNFLLILTILTIWLF. Over 42–45 the chain is Cytoplasmic; that stretch reads KNHR. The helical transmembrane segment at 46-66 threads the bilayer; it reads FRFLHETGGAMVYGLIMGLIL. Residues 67–126 are Lumenal-facing; that stretch reads RYATAPTDIDSGTVYNCGKLLFSPSTLLVNITDQVYEYKYQREINQHNISPHQGNAILEK. The chain crosses the membrane as a helical span at residues 127–147; the sequence is MTFDPEIFFNVLLPPIIFHAG. Residues 148–164 lie on the Cytoplasmic side of the membrane; the sequence is YSLKKRHFFQNLGSILT. The chain crosses the membrane as a helical span at residues 165-185; the sequence is YAFLGTAISCVVIGLIMYGFV. The Lumenal portion of the chain corresponds to 186-203; that stretch reads KAMVHAGQLKSGDFHFTD. The chain crosses the membrane as a helical span at residues 204-224; it reads CLFFGSLMSATDPVTVLAIFH. Topologically, residues 225-235 are cytoplasmic; sequence ELHVDPDLYTL. The chain crosses the membrane as a helical span at residues 236-256; the sequence is LFGESVLNDAVAIVLTYSISI. The Lumenal portion of the chain corresponds to 257 to 277; it reads YSPKENPNAFDTAAFFQSVGN. Residues 278–298 form a helical membrane-spanning segment; it reads FLGIFAGSFAMGSAYAVVTAL. Topologically, residues 299 to 309 are cytoplasmic; it reads LTKFTKLREFP. A helical membrane pass occupies residues 310-327; that stretch reads MLETGLFFLLSWSAFLSA. The Lumenal segment spans residues 328–333; that stretch reads EAAGLT. A helical membrane pass occupies residues 334–350; the sequence is GIVAVLFCGVTQAHYTY. The Cytoplasmic segment spans residues 351 to 364; that stretch reads NNLSSDSKLRTKQL. Residues 365 to 385 traverse the membrane as a helical segment; that stretch reads FEFMNFLAENVIFCYMGLALF. Thr-386 is a topological domain (lumenal). A helical transmembrane segment spans residues 387-407; it reads FQNHIFNALFILGAFLAIFVA. Residues 408–429 are Cytoplasmic-facing; it reads RACNIYPLSFLLNLGRKQKIPW. A helical membrane pass occupies residues 430 to 450; sequence NFQHMMMFSGLRGAIAFALAI. The Lumenal portion of the chain corresponds to 451 to 465; the sequence is RNTESQPKQMMFTTT. The chain crosses the membrane as a helical span at residues 466–486; that stretch reads LLLVFFTVWVFGGGTTPMLTW. The Cytoplasmic segment spans residues 487 to 644; that stretch reads LQIRVGVDLD…EQTRGQPQMD (158 aa).

Belongs to the monovalent cation:proton antiporter 1 (CPA1) transporter (TC 2.A.36) family. In terms of assembly, homodimer; phosphatidylinositol-4,5-bisphosphate (PIP2) and phosphatidylinositol 3,4,5-trisphosphate (PIP3) could be involved in the dimer stabilization. Interacts (via the C-terminus) with RACK1. Interacts with CHP1. As to expression, expressed in hair bundles and in vestibular hair bundles. Expressed in brain.

The protein resides in the late endosome membrane. It localises to the early endosome membrane. Its subcellular location is the recycling endosome membrane. It is found in the cell membrane. The protein localises to the cytoplasmic vesicle. The protein resides in the phagosome membrane. The enzyme catalyses Na(+)(in) + H(+)(out) = Na(+)(out) + H(+)(in). It catalyses the reaction K(+)(in) + H(+)(out) = K(+)(out) + H(+)(in). Its function is as follows. Endosomal Na(+), K(+)/H(+) antiporter. Mediates the electroneutral exchange of endosomal luminal H(+) for a cytosolic Na(+) or K(+). By facilitating proton efflux, SLC9A9 counteracts the acidity generated by vacuolar (V)-ATPase, thereby limiting luminal acidification. Regulates organellar pH and consequently, endosome maturation and endocytic trafficking of plasma membrane receptors and neurotransporters. Promotes the recycling of transferrin receptors back to the cell surface to facilitate additional iron uptake in the brain. Regulates synaptic transmission by regulating the luminal pH of axonal endosomes. Regulates phagosome lumenal pH, thus affecting phagosome maturation, and consequently, microbicidal activity in macrophages. Can also be active at the cell surface of specialized cells, e.g., in the inner ear hair bundles uses the high K(+) of the endolymph to regulate intracelular pH. The chain is Sodium/hydrogen exchanger 9 (Slc9a9) from Rattus norvegicus (Rat).